The following is a 112-amino-acid chain: Large ribosomal subunit protein uL22 (112 aa).

This sequence belongs to the universal ribosomal protein uL22 family. Part of the 50S ribosomal subunit.

In terms of biological role, this protein binds specifically to 23S rRNA; its binding is stimulated by other ribosomal proteins, e.g. L4, L17, and L20. It is important during the early stages of 50S assembly. It makes multiple contacts with different domains of the 23S rRNA in the assembled 50S subunit and ribosome. Functionally, the globular domain of the protein is located near the polypeptide exit tunnel on the outside of the subunit, while an extended beta-hairpin is found that lines the wall of the exit tunnel in the center of the 70S ribosome. This Akkermansia muciniphila (strain ATCC BAA-835 / DSM 22959 / JCM 33894 / BCRC 81048 / CCUG 64013 / CIP 107961 / Muc) protein is Large ribosomal subunit protein uL22.